Consider the following 582-residue polypeptide: ABC transporter-like protein ECU11_1340 (582 aa).

Residues 15-257 (VPNQNLSSNE…LGTKGIHNDG (243 aa)) form the ABC transporter domain. 47 to 54 (GTSGSGKT) contacts ATP. The ABC transmembrane type-2 domain maps to 316–519 (YVSFQMAIRQ…EIDAFISNFF (204 aa)). The next 6 helical transmembrane spans lie at 335 to 355 (ILYSLAMPIAMALFLVTGKYI), 359 to 378 (FSIATIKASMLSLSLYYVMN), 412 to 432 (TLVSILKYCIFFGIIYAFGLI), 436 to 456 (HAFLGQVLMYTLGGTVSSMLF), 482 to 502 (GALLGAGALLGALTLWISVIP), and 551 to 571 (SFLRILFLMFHPFAFFHSSIL).

This sequence belongs to the ABC transporter superfamily.

Its subcellular location is the membrane. The chain is ABC transporter-like protein ECU11_1340 from Encephalitozoon cuniculi (strain GB-M1) (Microsporidian parasite).